Here is a 362-residue protein sequence, read N- to C-terminus: Chorismate synthase (362 aa).

Arg46 contacts NADP(+). FMN contacts are provided by residues 122 to 124, 238 to 239, Gly278, 293 to 297, and Arg319; these read RSS, NA, and KPTPS.

Belongs to the chorismate synthase family. As to quaternary structure, homotetramer. FMNH2 is required as a cofactor.

The enzyme catalyses 5-O-(1-carboxyvinyl)-3-phosphoshikimate = chorismate + phosphate. It participates in metabolic intermediate biosynthesis; chorismate biosynthesis; chorismate from D-erythrose 4-phosphate and phosphoenolpyruvate: step 7/7. Its function is as follows. Catalyzes the anti-1,4-elimination of the C-3 phosphate and the C-6 proR hydrogen from 5-enolpyruvylshikimate-3-phosphate (EPSP) to yield chorismate, which is the branch point compound that serves as the starting substrate for the three terminal pathways of aromatic amino acid biosynthesis. This reaction introduces a second double bond into the aromatic ring system. The chain is Chorismate synthase from Campylobacter jejuni subsp. jejuni serotype O:6 (strain 81116 / NCTC 11828).